A 242-amino-acid chain; its full sequence is Uridylate kinase (242 aa).

Residue 17–20 coordinates ATP; sequence KLSG. A UMP-binding site is contributed by glycine 59. The ATP site is built by glycine 60 and arginine 64. Residues aspartate 79 and 140–147 contribute to the UMP site; that span reads TGNPFFTT. Residues threonine 167, tyrosine 173, and aspartate 176 each coordinate ATP.

It belongs to the UMP kinase family. As to quaternary structure, homohexamer.

The protein resides in the cytoplasm. The enzyme catalyses UMP + ATP = UDP + ADP. The protein operates within pyrimidine metabolism; CTP biosynthesis via de novo pathway; UDP from UMP (UMPK route): step 1/1. Its activity is regulated as follows. Inhibited by UTP. In terms of biological role, catalyzes the reversible phosphorylation of UMP to UDP. The sequence is that of Uridylate kinase from Marinobacter nauticus (strain ATCC 700491 / DSM 11845 / VT8) (Marinobacter aquaeolei).